Reading from the N-terminus, the 82-residue chain is MKPSWFPCLVFLCMLLLSALGGRKNKYYPGELLLEECWGQPKTNDCVKKCSRTFKCVYRNHTCCWTYCGNICAENGKFFERK.

The N-terminal stretch at 1–21 (MKPSWFPCLVFLCMLLLSALG) is a signal peptide.

The protein localises to the secreted. The polypeptide is Protein WFDC11 (Wfdc11) (Mus musculus (Mouse)).